An 89-amino-acid chain; its full sequence is Small ribosomal subunit protein bS18 (89 aa).

The protein belongs to the bacterial ribosomal protein bS18 family. Part of the 30S ribosomal subunit. Forms a tight heterodimer with protein bS6.

Functionally, binds as a heterodimer with protein bS6 to the central domain of the 16S rRNA, where it helps stabilize the platform of the 30S subunit. The sequence is that of Small ribosomal subunit protein bS18 from Bdellovibrio bacteriovorus (strain ATCC 15356 / DSM 50701 / NCIMB 9529 / HD100).